The chain runs to 432 residues: Glutamyl-tRNA reductase (432 aa).

Residues 49 to 52 (TCNR), serine 109, 114 to 116 (EGQ), and glutamine 120 contribute to the substrate site. The active-site Nucleophile is the cysteine 50. Residue 189–194 (GAGKMS) coordinates NADP(+).

The protein belongs to the glutamyl-tRNA reductase family. Homodimer.

The catalysed reaction is (S)-4-amino-5-oxopentanoate + tRNA(Glu) + NADP(+) = L-glutamyl-tRNA(Glu) + NADPH + H(+). It functions in the pathway porphyrin-containing compound metabolism; protoporphyrin-IX biosynthesis; 5-aminolevulinate from L-glutamyl-tRNA(Glu): step 1/2. Its pathway is porphyrin-containing compound metabolism; chlorophyll biosynthesis. Functionally, catalyzes the NADPH-dependent reduction of glutamyl-tRNA(Glu) to glutamate 1-semialdehyde (GSA). This is Glutamyl-tRNA reductase from Cyanothece sp. (strain PCC 7425 / ATCC 29141).